An 84-amino-acid polypeptide reads, in one-letter code: MQILQVKKQLVLTSRLKDLGHLPLKALSSETGEIFVAMDPVGTKDGDWVFTIANSAARDAAGDKRLLTDLTVGGIIDDWQPKQK.

The BMV domain occupies Met-1 to Asp-77.

The protein belongs to the CcmL/EutN family. CsoS4 subfamily. Homopentamer.

Its subcellular location is the carboxysome. In terms of biological role, probably forms vertices in the carboxysome, a polyhedral inclusion where RuBisCO (ribulose bisphosphate carboxylase, cbbL-cbbS) is sequestered. Has been modeled to induce curvature upon insertion into an otherwise flat hexagonal layer of major carboxysome subunits. The sequence is that of Carboxysome shell vertex protein CsoS4B from Hydrogenovibrio crunogenus (strain DSM 25203 / XCL-2) (Thiomicrospira crunogena).